A 495-amino-acid chain; its full sequence is 3-octaprenyl-4-hydroxybenzoate carboxy-lyase (495 aa).

Asn-171 is a Mn(2+) binding site. Prenylated FMN contacts are provided by residues 174 to 176 (IYR), 188 to 190 (RWL), and 193 to 194 (RG). Glu-237 is a Mn(2+) binding site. The Proton donor role is filled by Asp-286.

Belongs to the UbiD family. Homohexamer. Prenylated FMN serves as cofactor. Mn(2+) is required as a cofactor.

Its subcellular location is the cell membrane. The enzyme catalyses a 4-hydroxy-3-(all-trans-polyprenyl)benzoate + H(+) = a 2-(all-trans-polyprenyl)phenol + CO2. It functions in the pathway cofactor biosynthesis; ubiquinone biosynthesis. Its function is as follows. Catalyzes the decarboxylation of 3-octaprenyl-4-hydroxy benzoate to 2-octaprenylphenol, an intermediate step in ubiquinone biosynthesis. The sequence is that of 3-octaprenyl-4-hydroxybenzoate carboxy-lyase from Hamiltonella defensa subsp. Acyrthosiphon pisum (strain 5AT).